The sequence spans 296 residues: Arginase (296 aa).

Residues H97, D120, H122, and D124 each contribute to the Mn(2+) site. Substrate contacts are provided by residues 122 to 126 (HGDLN), 133 to 135 (SGN), and D176. Mn(2+) contacts are provided by D223 and D225. T237 and E268 together coordinate substrate.

The protein belongs to the arginase family. It depends on Mn(2+) as a cofactor.

It carries out the reaction L-arginine + H2O = urea + L-ornithine. It functions in the pathway nitrogen metabolism; urea cycle; L-ornithine and urea from L-arginine: step 1/1. Functionally, involved in the catabolism of arginine. In Bacillus subtilis (strain 168), this protein is Arginase.